A 1097-amino-acid polypeptide reads, in one-letter code: Protease Do-like 7 (1097 aa).

Positions Val55–Leu243 are serine protease. A PDZ domain is found at Met269 to Val366. The Charge relay system role is filled by His524. Positions Thr546–Phe556 are enriched in polar residues. A disordered region spans residues Thr546–Gly577. A compositionally biased stretch (basic and acidic residues) spans Ser558 to Glu567. The active-site Charge relay system is the Ser785.

The protein belongs to the peptidase S1C family.

It is found in the cytoplasm. In terms of biological role, probable serine protease. This is Protease Do-like 7 (DEGP7) from Arabidopsis thaliana (Mouse-ear cress).